A 139-amino-acid polypeptide reads, in one-letter code: Acyl carrier protein 5, chloroplastic (139 aa).

A chloroplast-targeting transit peptide spans 1-54 (MATSFCSSISMQAPFSATTTRFCLNKQATIFNNEKTNNLSFSLRRLMPARLAVS). The region spanning 59 to 134 (QETVEKVSEI…QAAELIEELV (76 aa)) is the Carrier domain. Ser-94 is subject to O-(pantetheine 4'-phosphoryl)serine.

The protein belongs to the acyl carrier protein (ACP) family. 4'-phosphopantetheine is transferred from CoA to a specific serine of apo-ACP by acpS. This modification is essential for activity because fatty acids are bound in thioester linkage to the sulfhydryl of the prosthetic group.

It is found in the plastid. The protein resides in the chloroplast. Functionally, carrier of the growing fatty acid chain in fatty acid biosynthesis. This chain is Acyl carrier protein 5, chloroplastic (ACP5), found in Arabidopsis thaliana (Mouse-ear cress).